Consider the following 205-residue polypeptide: MATKVYIVYYSMYGHVEKLAQEIRKGAASVDGVEAILWQVPETLQEDVLSKMSAPPKSDAPIITPNELAEADGFIFGFPTRFGMMAAQFKAFLDATGGLWRTQQLAGKPAGIFYSTGSQGGGQETTALTAITQLVHHGMIFVPIGYTFGAGMFEMENVKGGSPYGAGTFAGDGSRQPTELELGQAFHQGKYIAAISKKLKGPAAA.

The Flavodoxin-like domain maps to 5–192 (VYIVYYSMYG…GQAFHQGKYI (188 aa)). FMN contacts are provided by residues 11–15 (SMYGH), 112–165 (IFYS…SPYG), and His136. Tyr13 contributes to the NAD(+) binding site.

It belongs to the WrbA family. The cofactor is FMN.

It localises to the cell membrane. It carries out the reaction a quinone + NADH + H(+) = a quinol + NAD(+). The enzyme catalyses a quinone + NADPH + H(+) = a quinol + NADP(+). Functionally, catalyzes the transfer of electrons from NADH and NADPH to reduce quinone to the hydroquinone state. This chain is Probable NAD(P)H dehydrogenase (quinone) FQR1-like 1, found in Arabidopsis thaliana (Mouse-ear cress).